The following is a 621-amino-acid chain: Chaperone protein HscA homolog (621 aa).

Belongs to the heat shock protein 70 family.

In terms of biological role, chaperone involved in the maturation of iron-sulfur cluster-containing proteins. Has a low intrinsic ATPase activity which is markedly stimulated by HscB. The polypeptide is Chaperone protein HscA homolog (Cupriavidus taiwanensis (strain DSM 17343 / BCRC 17206 / CCUG 44338 / CIP 107171 / LMG 19424 / R1) (Ralstonia taiwanensis (strain LMG 19424))).